A 1163-amino-acid chain; its full sequence is DNA-directed RNA polymerase subunit beta 2 (1163 aa).

The protein belongs to the RNA polymerase beta chain family. As to quaternary structure, the RNAP catalytic core consists of 2 alpha, 1 beta, 1 beta' and 1 omega subunit. When a sigma factor is associated with the core the holoenzyme is formed, which can initiate transcription.

It carries out the reaction RNA(n) + a ribonucleoside 5'-triphosphate = RNA(n+1) + diphosphate. Its function is as follows. DNA-dependent RNA polymerase catalyzes the transcription of DNA into RNA using the four ribonucleoside triphosphates as substrates. The polypeptide is DNA-directed RNA polymerase subunit beta 2 (Nocardia farcinica (strain IFM 10152)).